We begin with the raw amino-acid sequence, 359 residues long: Protein Wnt-5b (359 aa).

The N-terminal stretch at 1 to 17 (MPSLLLLFTAALLSSWA) is a signal peptide. Cys-83 and Cys-94 form a disulfide bridge. Residues Asn-93 and Asn-99 are each glycosylated (N-linked (GlcNAc...) asparagine). Cystine bridges form between Cys-133/Cys-141, Cys-143/Cys-161, Cys-217/Cys-231, Cys-219/Cys-226, Cys-288/Cys-319, Cys-304/Cys-314, Cys-318/Cys-358, Cys-334/Cys-349, Cys-336/Cys-346, and Cys-341/Cys-342. Ser-223 is lipidated: O-palmitoleoyl serine; by PORCN. 2 N-linked (GlcNAc...) asparagine glycosylation sites follow: Asn-291 and Asn-305.

This sequence belongs to the Wnt family. As to quaternary structure, interacts with PORCN. Palmitoleoylation is required for efficient binding to frizzled receptors. Depalmitoleoylation leads to Wnt signaling pathway inhibition.

It is found in the secreted. The protein localises to the extracellular space. It localises to the extracellular matrix. Functionally, ligand for members of the frizzled family of seven transmembrane receptors. Probable developmental protein. May be a signaling molecule which affects the development of discrete regions of tissues. Is likely to signal over only few cell diameters. This chain is Protein Wnt-5b (WNT5B), found in Pongo abelii (Sumatran orangutan).